A 230-amino-acid polypeptide reads, in one-letter code: 3-beta-hydroxysteroid-Delta(8),Delta(7)-isomerase (230 aa).

Threonine 2 is modified (N-acetylthreonine). A run of 4 helical transmembrane segments spans residues 29–49 (WHILVGLFSFSGVLIVITWLL), 66–86 (LCWFAVCTFIHLVIEGWFSFY), 121–141 (MESVTACLWGPLSLWVVIAFL), and 185–205 (FWFYFVIMNAIWLVIPGILVF). One can recognise an EXPERA domain in the interval 61–204 (GRRLALCWFA…IWLVIPGILV (144 aa)).

It belongs to the EBP family. In terms of tissue distribution, expressed in liver.

The protein localises to the endoplasmic reticulum membrane. The protein resides in the nucleus envelope. It is found in the cytoplasmic vesicle. The catalysed reaction is lathosterol = 5alpha-cholest-8-en-3beta-ol. The enzyme catalyses zymosterol = 5alpha-cholesta-7,24-dien-3beta-ol. It carries out the reaction 5,6alpha-epoxy-5alpha-cholestan-3beta-ol + H2O = 5alpha-cholestane-3beta,5,6beta-triol. It catalyses the reaction 5,6beta-epoxy-5beta-cholestan-3beta-ol + H2O = 5alpha-cholestane-3beta,5,6beta-triol. It participates in steroid biosynthesis; cholesterol biosynthesis. Its activity is regulated as follows. Enzymatic activity is induced by 25-hydroxycholesterol, cholestyramine and lovastatin. Functionally, isomerase that catalyzes the conversion of Delta(8)-sterols to their corresponding Delta(7)-isomers. In terms of biological role, component of the microsomal antiestrogen binding site (AEBS), a multiproteic complex at the ER membrane that consists of an association between EBP and 7-dehydrocholesterol reductase/DHCR7. This complex is responsible for cholesterol-5,6-epoxide hydrolase (ChEH) activity, which consists in the hydration of cholesterol-5,6-epoxides (5,6-EC) into cholestane-3beta,5alpha,6beta-triol (CT). The precise role of each component of this complex has not been described yet. This is 3-beta-hydroxysteroid-Delta(8),Delta(7)-isomerase from Rattus norvegicus (Rat).